Here is an 83-residue protein sequence, read N- to C-terminus: Large ribosomal subunit protein bL27 (83 aa).

The disordered stretch occupies residues 1 to 25 (MAHKKGQGASRNGRDSESKRLGLKV).

It belongs to the bacterial ribosomal protein bL27 family.

In Chlamydia muridarum (strain MoPn / Nigg), this protein is Large ribosomal subunit protein bL27.